The chain runs to 73 residues: Large ribosomal subunit protein uL30 (73 aa).

It belongs to the universal ribosomal protein uL30 family. In terms of assembly, part of the 50S ribosomal subunit.

The protein is Large ribosomal subunit protein uL30 of Borreliella afzelii (strain PKo) (Borrelia afzelii).